A 132-amino-acid polypeptide reads, in one-letter code: Small ribosomal subunit protein uS11 (132 aa).

This sequence belongs to the universal ribosomal protein uS11 family. In terms of assembly, part of the 30S ribosomal subunit. Interacts with proteins S7 and S18. Binds to IF-3.

Functionally, located on the platform of the 30S subunit, it bridges several disparate RNA helices of the 16S rRNA. Forms part of the Shine-Dalgarno cleft in the 70S ribosome. The protein is Small ribosomal subunit protein uS11 of Legionella pneumophila (strain Corby).